The chain runs to 160 residues: Protein-export protein SecB (160 aa).

Belongs to the SecB family. Homotetramer, a dimer of dimers. One homotetramer interacts with 1 SecA dimer.

It is found in the cytoplasm. In terms of biological role, one of the proteins required for the normal export of preproteins out of the cell cytoplasm. It is a molecular chaperone that binds to a subset of precursor proteins, maintaining them in a translocation-competent state. It also specifically binds to its receptor SecA. The chain is Protein-export protein SecB from Orientia tsutsugamushi (strain Boryong) (Rickettsia tsutsugamushi).